The following is a 210-amino-acid chain: 3-phospho-D-glycerate guanylyltransferase (210 aa).

Belongs to the CofC family.

It catalyses the reaction (2R)-3-phosphoglycerate + GTP + H(+) = 3-[(R)-glyceryl]-diphospho-5'-guanosine + diphosphate. It functions in the pathway cofactor biosynthesis; coenzyme F420 biosynthesis. Guanylyltransferase that catalyzes the activation of (2R)-3-phosphoglycerate (3PG) as 3-[(R)-glyceryl]-diphospho-5'-guanosine, via the condensation of 3PG with GTP. It is involved in the biosynthesis of a derivative of the hydride carrier cofactor coenzyme F420, 3PG-F420. This Colwellia psychrerythraea (strain 34H / ATCC BAA-681) (Vibrio psychroerythus) protein is 3-phospho-D-glycerate guanylyltransferase.